The sequence spans 382 residues: Mannosyl phosphorylinositol ceramide synthase SUR1 (382 aa).

Topologically, residues 1 to 6 are cytoplasmic; sequence MRKELK. A helical transmembrane segment spans residues 7 to 27; sequence YLICFNILLLLSIIYYTFDLL. Over 28–269 the chain is Extracellular; the sequence is TLCIDDTVKD…KALENHILSC (242 aa). The chain crosses the membrane as a helical span at residues 270-290; sequence VVTGFIFGFFILYGEFTFYCW. Residues 291–382 are Cytoplasmic-facing; that stretch reads LCSKNFSNLT…SKYSLGNNSS (92 aa). Position 349 is a phosphoserine (Ser-349).

The protein belongs to the glycosyltransferase 32 family. Heterodimer of SUR1 and CSG2.

It is found in the membrane. The enzyme catalyses a 1D-myo-inositol-1-phospho-N-[(R)-2-hydroxy-very-long-chain fatty acyl]-(R)-4-hydroxysphingoid base + GDP-alpha-D-mannose = an alpha-D-mannosyl-(1&lt;-&gt;6)-1D-myo-inositol-1-phospho-N-[(R)-2-hydroxy-very-long-chain fatty acyl]-(R)-4-hydroxysphingoid base + GDP + H(+). In terms of biological role, involved in the synthesis of mannosyl phosphorylinositol ceramide. Catalyzes the addition of mannosyl to phosphorylinositol ceramide. Suppressor of RVS161 mutation. The polypeptide is Mannosyl phosphorylinositol ceramide synthase SUR1 (Saccharomyces cerevisiae (strain ATCC 204508 / S288c) (Baker's yeast)).